A 1341-amino-acid polypeptide reads, in one-letter code: uncharacterized protein (1341 aa).

Residues 41 to 68 constitute a DNA-binding region (zn(2)-C6 fungal-type); the sequence is CLLCRRRKQRCDHKLPSCTACLKAGIKC. Composition is skewed to low complexity over residues 72–93, 779–791, 864–906, 920–967, and 1036–1050; these read SKYSSSTSNSNTNNNTPTAGTV, SNSANAANLSNSN, SNSS…NDNN, NHNN…GNNS, and SPSKSSSISTASSHS. Disordered stretches follow at residues 72-100, 770-804, 864-971, and 1031-1116; these read SKYSSSTSNSNTNNNTPTAGTVPPTPHPV, ISSGDTLHDSNSANAANLSNSNDKNISHNGGMPPA, SNSS…QYVR, and TMTN…NSNP. A compositionally biased stretch (polar residues) spans 1057–1076; it reads MTQSPTPYPQTSNMLPQQHV. Over residues 1078–1090 the composition is skewed to low complexity; sequence RPLPQQQREQPQQ. Residues 1091 to 1116 are compositionally biased toward polar residues; the sequence is HITSPQRFSESNFTNQLNNGMINSNP. Residue Ser1143 is modified to Phosphoserine. A compositionally biased stretch (polar residues) spans 1220–1230; it reads SQEPSSLSMDK. Residues 1220–1240 form a disordered region; the sequence is SQEPSSLSMDKQQQQHQQQNM.

Its subcellular location is the nucleus. This is an uncharacterized protein from Saccharomyces cerevisiae (strain ATCC 204508 / S288c) (Baker's yeast).